The primary structure comprises 367 residues: Anhydro-N-acetylmuramic acid kinase (367 aa).

13-20 (GTSMDGAD) contacts ATP.

Belongs to the anhydro-N-acetylmuramic acid kinase family.

It catalyses the reaction 1,6-anhydro-N-acetyl-beta-muramate + ATP + H2O = N-acetyl-D-muramate 6-phosphate + ADP + H(+). It functions in the pathway amino-sugar metabolism; 1,6-anhydro-N-acetylmuramate degradation. It participates in cell wall biogenesis; peptidoglycan recycling. Functionally, catalyzes the specific phosphorylation of 1,6-anhydro-N-acetylmuramic acid (anhMurNAc) with the simultaneous cleavage of the 1,6-anhydro ring, generating MurNAc-6-P. Is required for the utilization of anhMurNAc either imported from the medium or derived from its own cell wall murein, and thus plays a role in cell wall recycling. The protein is Anhydro-N-acetylmuramic acid kinase of Neisseria meningitidis serogroup A / serotype 4A (strain DSM 15465 / Z2491).